A 211-amino-acid polypeptide reads, in one-letter code: UPF0637 protein ABC2405 (211 aa).

This sequence belongs to the UPF0637 family.

This chain is UPF0637 protein ABC2405, found in Shouchella clausii (strain KSM-K16) (Alkalihalobacillus clausii).